A 507-amino-acid polypeptide reads, in one-letter code: Fluoroacetaldehyde dehydrogenase (507 aa).

Residue 219-225 (GFGIEAG) participates in NAD(+) binding. Active-site residues include Glu-263 and Cys-302.

Belongs to the aldehyde dehydrogenase family. In terms of assembly, homotetramer.

The catalysed reaction is fluoroacetaldehyde + NAD(+) + H2O = fluoroacetate + NADH + 2 H(+). Catalyzes the oxidation of fluoroacetaldehyde to fluoroacetate. Has high affinity for fluoroacetate and glycolaldehyde but not for acetaldehyde. This is Fluoroacetaldehyde dehydrogenase from Streptantibioticus cattleyicolor (strain ATCC 35852 / DSM 46488 / JCM 4925 / NBRC 14057 / NRRL 8057) (Streptomyces cattleya).